The following is a 545-amino-acid chain: Probable protein kinase UbiB (545 aa).

In terms of domain architecture, Protein kinase spans 123 to 501 (DFDIVPLASA…RVRQHQSHYL (379 aa)). Residues 129-137 (LASASIAQV) and Lys-152 contribute to the ATP site. Asp-287 functions as the Proton acceptor in the catalytic mechanism. 2 helical membrane passes run 498–518 (SHYL…VVLS) and 521–541 (EWDG…LVGW).

Belongs to the ABC1 family. UbiB subfamily.

The protein localises to the cell inner membrane. It participates in cofactor biosynthesis; ubiquinone biosynthesis [regulation]. Functionally, is probably a protein kinase regulator of UbiI activity which is involved in aerobic coenzyme Q (ubiquinone) biosynthesis. The polypeptide is Probable protein kinase UbiB (Erwinia tasmaniensis (strain DSM 17950 / CFBP 7177 / CIP 109463 / NCPPB 4357 / Et1/99)).